Consider the following 201-residue polypeptide: Holliday junction branch migration complex subunit RuvA (201 aa).

Residues methionine 1 to alanine 63 are domain I. Residues aspartate 64–glycine 142 are domain II. The segment at glycine 143–asparagine 153 is flexible linker. The tract at residues asparagine 153–leucine 201 is domain III.

The protein belongs to the RuvA family. Homotetramer. Forms an RuvA(8)-RuvB(12)-Holliday junction (HJ) complex. HJ DNA is sandwiched between 2 RuvA tetramers; dsDNA enters through RuvA and exits via RuvB. An RuvB hexamer assembles on each DNA strand where it exits the tetramer. Each RuvB hexamer is contacted by two RuvA subunits (via domain III) on 2 adjacent RuvB subunits; this complex drives branch migration. In the full resolvosome a probable DNA-RuvA(4)-RuvB(12)-RuvC(2) complex forms which resolves the HJ.

The protein resides in the cytoplasm. In terms of biological role, the RuvA-RuvB-RuvC complex processes Holliday junction (HJ) DNA during genetic recombination and DNA repair, while the RuvA-RuvB complex plays an important role in the rescue of blocked DNA replication forks via replication fork reversal (RFR). RuvA specifically binds to HJ cruciform DNA, conferring on it an open structure. The RuvB hexamer acts as an ATP-dependent pump, pulling dsDNA into and through the RuvAB complex. HJ branch migration allows RuvC to scan DNA until it finds its consensus sequence, where it cleaves and resolves the cruciform DNA. In Bacteroides fragilis (strain ATCC 25285 / DSM 2151 / CCUG 4856 / JCM 11019 / LMG 10263 / NCTC 9343 / Onslow / VPI 2553 / EN-2), this protein is Holliday junction branch migration complex subunit RuvA.